The primary structure comprises 250 residues: Probable transcriptional regulatory protein Ppha_0657 (250 aa).

The protein belongs to the TACO1 family.

It is found in the cytoplasm. This Pelodictyon phaeoclathratiforme (strain DSM 5477 / BU-1) protein is Probable transcriptional regulatory protein Ppha_0657.